The chain runs to 214 residues: Elongation factor Ts (214 aa).

Positions 80–83 are involved in Mg(2+) ion dislocation from EF-Tu; it reads TDFV.

The protein belongs to the EF-Ts family.

The protein localises to the cytoplasm. In terms of biological role, associates with the EF-Tu.GDP complex and induces the exchange of GDP to GTP. It remains bound to the aminoacyl-tRNA.EF-Tu.GTP complex up to the GTP hydrolysis stage on the ribosome. The chain is Elongation factor Ts from Syntrophomonas wolfei subsp. wolfei (strain DSM 2245B / Goettingen).